The sequence spans 156 residues: Small ribosomal subunit protein uS7 (156 aa).

The protein belongs to the universal ribosomal protein uS7 family. In terms of assembly, part of the 30S ribosomal subunit. Contacts proteins S9 and S11.

Functionally, one of the primary rRNA binding proteins, it binds directly to 16S rRNA where it nucleates assembly of the head domain of the 30S subunit. Is located at the subunit interface close to the decoding center, probably blocks exit of the E-site tRNA. The chain is Small ribosomal subunit protein uS7 from Staphylococcus carnosus (strain TM300).